A 572-amino-acid chain; its full sequence is 3-ketosteroid oxygenase (572 aa).

The next 2 membrane-spanning stretches (helical) occupy residues 52 to 72 (AFALSHHIIMGIYLLILRNFL) and 84 to 104 (YFMRVFIVHIIYIIISYFIRI).

The protein belongs to the cytochrome P450 family. Expressed in the 2 embryonic head hypodermal cells XXXL/R.

It is found in the membrane. It catalyses the reaction 5alpha-cholest-7-en-3-one + 3 reduced [NADPH--hemoprotein reductase] + 3 O2 = (25S)-Delta7-dafachronate + 3 oxidized [NADPH--hemoprotein reductase] + 4 H2O + 4 H(+). The enzyme catalyses cholest-4-en-3-one + 3 reduced [NADPH--hemoprotein reductase] + 3 O2 = (25S)-3-oxocholest-4-en-26-oate + 3 oxidized [NADPH--hemoprotein reductase] + 4 H2O + 4 H(+). It functions in the pathway steroid hormone biosynthesis; dafachronic acid biosynthesis. In terms of biological role, converts the 3-keto steroids 4-cholesten-3-one and lathosterone into the carboxylic metabolites 3-keto-4-cholestenate (Delta(4)-dafachronic acid, Delta(4)-DA) and 3-keto-7,(5a)-cholestenate (Delta(7)-dafachronic acid, Delta(7)-DA) respectively, by catalyzing successive oxidations at C-26. Dafachronic acids bind directly to the nuclear hormone receptor (NHR) DAF-12, suppressing dauer formation and inducing reproductive growth. In a non-cell autonomous manner, negatively regulates body wall muscle arm extensions to motor neurons probably by preventing daf-12 isoform b activation. May be involved in thermotolerance. The polypeptide is 3-ketosteroid oxygenase (daf-9) (Caenorhabditis elegans).